The chain runs to 470 residues: MAKGKIVQVIGPVVDIEFPAEELPSILNAITIKGKSGDIDINLTVEVMQHLGDGITRCIAMSSTDGLTRGMEAVDTGSPIKVPVGEETLGRVFNVLGQTVDHNPAPVGNKEFWPIHRPAPKFDEQETSTQILETGIKVVDLIAPYSRGGKIGLFGGAGVGKTVLIMELIHNIATQHGGYSVFSGVGERTREGNDLWSEMTESGVINKTALVYGQMNEPPGARMRVALTGLTMAEYFRDVQHQDVLLFIDNIFRFIQAGSEVSALLGRMPSAVGYQPTLTTDVGALQERITSTKKGSITSVQAVYVPADDLTDPGPAATFTHLDATTVLSRQIAELGIYPAVDPLDSTSRILDPHVIGEDHYEVARGVQAVLQKYKELQDIIAILGMEELSDADKLTVARARKIQRFLSQPFFVAEQFTGSPGKYVPLKETIRGFKEILEGKYDDLPESAFYMVGSIDEAVEAAKKIKQEA.

155-162 (GGAGVGKT) contacts ATP.

Belongs to the ATPase alpha/beta chains family. In terms of assembly, F-type ATPases have 2 components, CF(1) - the catalytic core - and CF(0) - the membrane proton channel. CF(1) has five subunits: alpha(3), beta(3), gamma(1), delta(1), epsilon(1). CF(0) has three main subunits: a(1), b(2) and c(9-12). The alpha and beta chains form an alternating ring which encloses part of the gamma chain. CF(1) is attached to CF(0) by a central stalk formed by the gamma and epsilon chains, while a peripheral stalk is formed by the delta and b chains.

It localises to the cell membrane. The catalysed reaction is ATP + H2O + 4 H(+)(in) = ADP + phosphate + 5 H(+)(out). In terms of biological role, produces ATP from ADP in the presence of a proton gradient across the membrane. The catalytic sites are hosted primarily by the beta subunits. In Pectinatus frisingensis, this protein is ATP synthase subunit beta.